Here is a 150-residue protein sequence, read N- to C-terminus: Small ribosomal subunit protein uS11 (150 aa).

It belongs to the universal ribosomal protein uS11 family. As to quaternary structure, part of the 30S ribosomal subunit. Interacts with proteins S7 and S18. Binds to IF-3.

Located on the platform of the 30S subunit, it bridges several disparate RNA helices of the 16S rRNA. Forms part of the Shine-Dalgarno cleft in the 70S ribosome. The polypeptide is Small ribosomal subunit protein uS11 (Pelagibacter ubique (strain HTCC1062)).